Here is a 216-residue protein sequence, read N- to C-terminus: Uracil phosphoribosyltransferase (216 aa).

30–34 (KNLVR) is a binding site for GTP. Residues Arg-80, Arg-105, and 140-148 (DPMIATAST) each bind 5-phospho-alpha-D-ribose 1-diphosphate. Uracil is bound by residues Ile-203 and 208–210 (GDA). Position 209 (Asp-209) interacts with 5-phospho-alpha-D-ribose 1-diphosphate.

It belongs to the UPRTase family. The cofactor is Mg(2+).

The enzyme catalyses UMP + diphosphate = 5-phospho-alpha-D-ribose 1-diphosphate + uracil. It participates in pyrimidine metabolism; UMP biosynthesis via salvage pathway; UMP from uracil: step 1/1. With respect to regulation, allosterically activated by GTP. Catalyzes the conversion of uracil and 5-phospho-alpha-D-ribose 1-diphosphate (PRPP) to UMP and diphosphate. The sequence is that of Uracil phosphoribosyltransferase from Saccharolobus islandicus (strain M.16.4 / Kamchatka #3) (Sulfolobus islandicus).